Consider the following 358-residue polypeptide: 5-amino-6-(D-ribitylamino)uracil--L-tyrosine 4-hydroxyphenyl transferase 2 (358 aa).

The 248-residue stretch at V45 to R292 folds into the Radical SAM core domain. The [4Fe-4S] cluster site is built by C59, C63, and C66.

It belongs to the radical SAM superfamily. CofH family. In terms of assembly, consists of two subunits, CofG and CofH. [4Fe-4S] cluster serves as cofactor.

It catalyses the reaction 5-amino-6-(D-ribitylamino)uracil + L-tyrosine + S-adenosyl-L-methionine = 5-amino-5-(4-hydroxybenzyl)-6-(D-ribitylimino)-5,6-dihydrouracil + 2-iminoacetate + 5'-deoxyadenosine + L-methionine + H(+). Its pathway is cofactor biosynthesis; coenzyme F0 biosynthesis. Catalyzes the radical-mediated synthesis of 5-amino-5-(4-hydroxybenzyl)-6-(D-ribitylimino)-5,6-dihydrouracil from 5-amino-6-(D-ribitylamino)uracil and L-tyrosine. In Methanococcus maripaludis (strain DSM 14266 / JCM 13030 / NBRC 101832 / S2 / LL), this protein is 5-amino-6-(D-ribitylamino)uracil--L-tyrosine 4-hydroxyphenyl transferase 2.